Consider the following 209-residue polypeptide: Guanylate kinase (209 aa).

The 179-residue stretch at 7–185 (GNLYIVAAPS…AAMELQSIVI (179 aa)) folds into the Guanylate kinase-like domain. 14-21 (APSGGGKT) serves as a coordination point for ATP.

The protein belongs to the guanylate kinase family.

The protein localises to the cytoplasm. It carries out the reaction GMP + ATP = GDP + ADP. In terms of biological role, essential for recycling GMP and indirectly, cGMP. In Legionella pneumophila (strain Lens), this protein is Guanylate kinase.